The following is a 1321-amino-acid chain: Bile salt export pump (1321 aa).

Residues 1-62 are Cytoplasmic-facing; sequence MSDSVILRSV…FSSSKDNWLM (62 aa). The region spanning 62-385 is the ABC transmembrane type-1 1 domain; it reads MFMGSVCALL…ASSCLEIFST (324 aa). A helical transmembrane segment spans residues 63-83; that stretch reads FMGSVCALLHGMAQPGMIIVF. The Extracellular portion of the chain corresponds to 84 to 147; sequence GILTDIFVEY…VIKFSGIYAG (64 aa). N-linked (GlcNAc...) asparagine glycosylation is found at Asn-109, Asn-116, Asn-122, and Asn-125. A helical membrane pass occupies residues 148 to 168; sequence VGVAVLILGYFQIRLWVITGA. Residues 169 to 215 lie on the Cytoplasmic side of the membrane; the sequence is RQIRKMRKFYFRRIMRMEIGWFDCTSVGELNSRFSDDINKIDEAIAD. The helical transmembrane segment at 216–236 threads the bilayer; that stretch reads QMALFLQRLSTALSGLLLGFY. The Extracellular segment spans residues 237 to 240; it reads RGWK. The helical transmembrane segment at 241 to 261 threads the bilayer; sequence LTLVILAVSPLIGIGAAVIGL. Residues 262–319 are Cytoplasmic-facing; the sequence is SVAKFTELELKAYAKAGSIADEVLSSIRTVAAFGGENKEVERYEKNLMFAQRWGIWKG. A helical membrane pass occupies residues 320–340; sequence MVMGFFTGYMWCLIFFCYALA. Residues 341-353 are Extracellular-facing; that stretch reads FWYGSRLVLDEGE. A helical membrane pass occupies residues 354 to 374; sequence YTPGTLIQIFLCVIIAAMNIG. The Cytoplasmic portion of the chain corresponds to 375 to 755; sequence NASSCLEIFS…KYNISEWPYI (381 aa). In terms of domain architecture, ABC transporter 1 spans 420–656; sequence IEFHNVTFHY…KGVYFMLVTL (237 aa). 455–462 contacts ATP; sequence GSSGAGKS. A Phosphothreonine modification is found at Thr-586. Residue Ser-587 is modified to Phosphoserine. The tract at residues 651–674 is interaction with HAX1; sequence FMLVTLQSQEDNTHKETGIKGKDT. Basic and acidic residues predominate over residues 662-684; the sequence is NTHKETGIKGKDTTEGDTPERTF. Residues 662 to 722 form a disordered region; sequence NTHKETGIKG…PLAIGDHKSS (61 aa). A phosphoserine mark is found at Ser-692, Ser-703, and Ser-706. The region spanning 755 to 1043 is the ABC transmembrane type-1 2 domain; sequence ILVGALCAAI…TFSYTPSYAK (289 aa). Residues 756–776 form a helical membrane-spanning segment; it reads LVGALCAAINGAVTPIYSLLF. Residues 777–794 are Extracellular-facing; it reads SQILKTFSLVDKEQQRSE. Residues 795–815 form a helical membrane-spanning segment; sequence IYSMCLFFVILGCVSLFTQFL. Topologically, residues 816-869 are cytoplasmic; it reads QGYNFAKSGELLTKRLRKFGFKAMLRQDIGWFDDLKNNPGVLTTRLATDASQVQ. A run of 2 helical transmembrane segments spans residues 870–890 and 891–911; these read GATG…FVAV and LIAF…FPFL. Over 912 to 979 the chain is Cytoplasmic; it reads ALSGAVQTKM…SYKTAIRKAN (68 aa). A helical membrane pass occupies residues 980 to 1000; it reads VYGLCYAFSQGISFLANSAAY. Residues 1001–1011 lie on the Extracellular side of the membrane; the sequence is RYGGYLIVYED. Residues 1012 to 1032 traverse the membrane as a helical segment; it reads LNFSYVFRVVSSIAMSATAVG. The Cytoplasmic segment spans residues 1033 to 1321; the sequence is RTFSYTPSYA…KLVITGAPIS (289 aa). An ABC transporter 2 domain is found at 1078 to 1316; the sequence is IDFIDCKFTY…KGAYYKLVIT (239 aa). 1113–1120 contributes to the ATP binding site; sequence GSSGCGKS. Ser-1321 bears the Phosphoserine mark.

Belongs to the ABC transporter superfamily. ABCB family. Multidrug resistance exporter (TC 3.A.1.201) subfamily. As to quaternary structure, interacts with HAX1. Interacts with the adapter protein complex 2 (AP-2) throught AP2A2 or AP2A1; this interaction regulates cell membrane expression of ABCB11 through its internalization in a clathrin-dependent manner and its subsequent degradation. N-glycosylated. Post-translationally, ubiquitinated; short-chain ubiquitination regulates cell-Surface expression of ABCB11. In terms of tissue distribution, expressed predominantly, if not exclusively in the liver, where it was further localized to the canalicular microvilli and to subcanalicular vesicles of the hepatocytes by in situ.

It localises to the apical cell membrane. It is found in the recycling endosome membrane. Its subcellular location is the endosome. The protein resides in the cell membrane. It catalyses the reaction cholate(in) + ATP + H2O = cholate(out) + ADP + phosphate + H(+). It carries out the reaction taurocholate(in) + ATP + H2O = taurocholate(out) + ADP + phosphate + H(+). The catalysed reaction is glycocholate(in) + ATP + H2O = glycocholate(out) + ADP + phosphate + H(+). The enzyme catalyses glycochenodeoxycholate(in) + ATP + H2O = glycochenodeoxycholate(out) + ADP + phosphate + H(+). It catalyses the reaction taurochenodeoxycholate(in) + ATP + H2O = taurochenodeoxycholate(out) + ADP + phosphate + H(+). It carries out the reaction glycoursodeoxycholate(in) + ATP + H2O = glycoursodeoxycholate(out) + ADP + phosphate + H(+). The catalysed reaction is tauroursodeoxycholate(in) + ATP + H2O = tauroursodeoxycholate(out) + ADP + phosphate + H(+). The enzyme catalyses taurodeoxycholate(in) + ATP + H2O = taurodeoxycholate(out) + ADP + phosphate + H(+). It catalyses the reaction taurolithocholate 3-sulfate(in) + ATP + H2O = taurolithocholate 3-sulfate(out) + ADP + phosphate + H(+). It carries out the reaction pravastatin(in) + ATP + H2O = pravastatin(out) + ADP + phosphate + H(+). The uptake of taurocholate is inhibited by taurolithocholate sulfate with an IC(50) of 9 uM. Pravastatin competitively inhibits the transport of taurocholic acid. Cyclosporin A, glibenclamide, rifampicin and troglitazonestrongly competitively inhibit the transport activity of taurocholate. The canalicular transport activity of taurocholate is strongly dependent on canalicular membrane cholesterol content. The uptake of taurocholate is increased by short- and medium-chain fatty acids. Cholesterol increases transport capacity of taurocholate without affecting the affinity for the substrate. Catalyzes the transport of the major hydrophobic bile salts, such as taurine and glycine-conjugated cholic acid across the canalicular membrane of hepatocytes in an ATP-dependent manner, therefore participates in hepatic bile acid homeostasis and consequently to lipid homeostasis through regulation of biliary lipid secretion in a bile salts dependent manner. Transports taurine-conjugated bile salts more rapidly than glycine-conjugated bile salts. Also transports non-bile acid compounds, such as pravastatin and fexofenadine in an ATP-dependent manner and may be involved in their biliary excretion. This is Bile salt export pump from Mus musculus (Mouse).